The sequence spans 578 residues: Matrix metalloproteinase-17 (578 aa).

Disordered regions lie at residues 1 to 22 and 107 to 133; these read MGRRPRGPGSPRGPGPPRPGPG and PRCSLPDLPPGAQSRRKRQTPPPTKWS. The N-terminal stretch at 1-39 is a signal peptide; it reads MGRRPRGPGSPRGPGPPRPGPGLPPLLLVLALAAHGGCA. Positions 11–22 are enriched in pro residues; that stretch reads PRGPGPPRPGPG. Positions 40–124 are excised as a propeptide; sequence APAPRAEDLS…PPGAQSRRKR (85 aa). The short motif at 107 to 114 is the Cysteine switch element; it reads PRCSLPDL. Residue C109 coordinates Zn(2+). N136 is a glycosylation site (N-linked (GlcNAc...) asparagine). Zn(2+) is bound at residue H247. Residue E248 is part of the active site. Zn(2+)-binding residues include H251 and H257. The segment at 301 to 334 is disordered; the sequence is PTAQLDTPEPEEPPLLPEPPNNRSSTPPQKDVPH. N322 carries an N-linked (GlcNAc...) asparagine glycan. Hemopexin repeat units follow at residues 333 to 382, 386 to 432, 436 to 479, and 480 to 527; these read PHRC…WRGL, LDSV…SLPP, DAVF…WRGV, and PSML…WLVC. Residues C336 and C527 are joined by a disulfide bond. The GPI-anchor amidated serine moiety is linked to residue S558. Positions 559–578 are cleaved as a propeptide — removed in mature form; sequence DAHRLALPSLLLLTPLLWGL.

It belongs to the peptidase M10A family. Requires Zn(2+) as cofactor. Ca(2+) serves as cofactor. In terms of processing, the precursor is cleaved by a furin endopeptidase. As to expression, expressed by monocytes and macrophages.

Its subcellular location is the cell membrane. The protein localises to the secreted. It is found in the extracellular space. It localises to the extracellular matrix. Endopeptidase that degrades various components of the extracellular matrix, such as fibrin. May be involved in the activation of membrane-bound precursors of growth factors or inflammatory mediators, such as tumor necrosis factor-alpha. May also be involved in tumoral process. Not obvious if able to proteolytically activate progelatinase A. Does not hydrolyze collagen types I, II, III, IV and V, gelatin, fibronectin, laminin, decorin nor alpha1-antitrypsin. The polypeptide is Matrix metalloproteinase-17 (Mmp17) (Mus musculus (Mouse)).